A 156-amino-acid polypeptide reads, in one-letter code: ATP synthase subunit b (156 aa).

A helical transmembrane segment spans residues 5–27; that stretch reads ITLIGQMITFAIFVGFTMKFVWP.

Belongs to the ATPase B chain family. In terms of assembly, F-type ATPases have 2 components, F(1) - the catalytic core - and F(0) - the membrane proton channel. F(1) has five subunits: alpha(3), beta(3), gamma(1), delta(1), epsilon(1). F(0) has three main subunits: a(1), b(2) and c(10-14). The alpha and beta chains form an alternating ring which encloses part of the gamma chain. F(1) is attached to F(0) by a central stalk formed by the gamma and epsilon chains, while a peripheral stalk is formed by the delta and b chains.

The protein localises to the cell inner membrane. Its function is as follows. F(1)F(0) ATP synthase produces ATP from ADP in the presence of a proton or sodium gradient. F-type ATPases consist of two structural domains, F(1) containing the extramembraneous catalytic core and F(0) containing the membrane proton channel, linked together by a central stalk and a peripheral stalk. During catalysis, ATP synthesis in the catalytic domain of F(1) is coupled via a rotary mechanism of the central stalk subunits to proton translocation. Component of the F(0) channel, it forms part of the peripheral stalk, linking F(1) to F(0). The polypeptide is ATP synthase subunit b (Francisella tularensis subsp. tularensis (strain WY96-3418)).